A 91-amino-acid polypeptide reads, in one-letter code: Bombyxin C-1 (91 aa).

An N-terminal signal peptide occupies residues 1 to 19; the sequence is MKLVMLLVVVSAMLVLGGA. At Q20 the chain carries Pyrrolidone carboxylic acid. 3 cysteine pairs are disulfide-bonded: C27-C76, C39-C89, and C75-C80. The propeptide at 47 to 67 is c peptide like; that stretch reads SGSQYAGYGWPWLPPFSSSRG.

This sequence belongs to the insulin family. As to quaternary structure, heterodimer of a B chain and an A chain linked by two disulfide bonds.

It localises to the secreted. Its function is as follows. Brain peptide responsible for activation of prothoracic glands to produce ecdysone in insects. In Bombyx mori (Silk moth), this protein is Bombyxin C-1 (BBXC1).